An 865-amino-acid polypeptide reads, in one-letter code: Alanine--tRNA ligase (865 aa).

The Zn(2+) site is built by His-554, His-558, Cys-656, and His-660.

This sequence belongs to the class-II aminoacyl-tRNA synthetase family. Zn(2+) is required as a cofactor.

The protein resides in the cytoplasm. The catalysed reaction is tRNA(Ala) + L-alanine + ATP = L-alanyl-tRNA(Ala) + AMP + diphosphate. Its function is as follows. Catalyzes the attachment of alanine to tRNA(Ala) in a two-step reaction: alanine is first activated by ATP to form Ala-AMP and then transferred to the acceptor end of tRNA(Ala). Also edits incorrectly charged Ser-tRNA(Ala) and Gly-tRNA(Ala) via its editing domain. This chain is Alanine--tRNA ligase, found in Idiomarina loihiensis (strain ATCC BAA-735 / DSM 15497 / L2-TR).